A 213-amino-acid polypeptide reads, in one-letter code: High frequency lysogenization protein HflD homolog (213 aa).

The stretch at 79–122 (QGLNAELTRYTLSLMVLERKLSSAKGALNTLGDRINGLQRQLDH) forms a coiled coil.

It belongs to the HflD family.

It is found in the cytoplasm. The protein resides in the cell inner membrane. In Salmonella typhi, this protein is High frequency lysogenization protein HflD homolog.